We begin with the raw amino-acid sequence, 289 residues long: Pseudouridine-5'-phosphate glycosidase (289 aa).

Residue glutamate 10 is the Proton donor of the active site. Residues lysine 71 and valine 91 each coordinate substrate. Aspartate 121 contributes to the Mn(2+) binding site. 123 to 125 (SQD) contacts substrate. Lysine 142 acts as the Nucleophile in catalysis.

This sequence belongs to the pseudouridine-5'-phosphate glycosidase family. As to quaternary structure, homotrimer. Mn(2+) serves as cofactor.

The enzyme catalyses D-ribose 5-phosphate + uracil = psi-UMP + H2O. In terms of biological role, catalyzes the reversible cleavage of pseudouridine 5'-phosphate (PsiMP) to ribose 5-phosphate and uracil. Functions biologically in the cleavage direction, as part of a pseudouridine degradation pathway. The polypeptide is Pseudouridine-5'-phosphate glycosidase (Kosmotoga olearia (strain ATCC BAA-1733 / DSM 21960 / TBF 19.5.1)).